Consider the following 99-residue polypeptide: Large ribosomal subunit protein bL28 (99 aa).

Belongs to the bacterial ribosomal protein bL28 family.

This Caulobacter vibrioides (strain ATCC 19089 / CIP 103742 / CB 15) (Caulobacter crescentus) protein is Large ribosomal subunit protein bL28.